Reading from the N-terminus, the 139-residue chain is Putative pre-16S rRNA nuclease (139 aa).

This sequence belongs to the YqgF nuclease family.

It is found in the cytoplasm. Its function is as follows. Could be a nuclease involved in processing of the 5'-end of pre-16S rRNA. This Streptococcus mutans serotype c (strain ATCC 700610 / UA159) protein is Putative pre-16S rRNA nuclease.